We begin with the raw amino-acid sequence, 606 residues long: ATP-dependent rRNA helicase SPB4 (606 aa).

Residues 7 to 35 (WDNLGFSLLPWIRTGLDVMGFETMTPVQA) carry the Q motif motif. The region spanning 38 to 224 (IPMLAGNKDV…KTGLRNPVRI (187 aa)) is the Helicase ATP-binding domain. An ATP-binding site is contributed by 51–58 (SVTGSGKT). The short motif at 172–175 (DEAD) is the DEAD box element. The region spanning 248–404 (KLQLLVSILN…ELDLEVKGIT (157 aa)) is the Helicase C-terminal domain. Serine 254 is modified (phosphoserine). Residues 539–582 (KTLTKERKLERKEKMSLKRKAIEEELKAEELDENAEEERIKEDW) adopt a coiled-coil conformation.

This sequence belongs to the DEAD box helicase family. DDX55/SPB4 subfamily. Component of pre-60S ribosomal complexes.

The protein resides in the nucleus. It localises to the nucleolus. It catalyses the reaction ATP + H2O = ADP + phosphate + H(+). Its function is as follows. ATP-binding RNA helicase involved in the biogenesis of 60S ribosomal subunits. Binds 90S pre-ribosomal particles and dissociates from pre-60S ribosomal particles after processing of 27SB pre-rRNA. Required for the normal formation of 18S rRNA through the processing of pre-rRNAs at sites A0, A1 and A2, and the normal formation of 25S and 5.8S rRNAs through the processing of pre-rRNAs at sites C1 and C2. Also required for recruitment of NOG2 to pre-ribosomes. The protein is ATP-dependent rRNA helicase SPB4 of Saccharomyces cerevisiae (strain ATCC 204508 / S288c) (Baker's yeast).